The primary structure comprises 154 residues: Iron sulfur cluster assembly protein 1, mitochondrial (154 aa).

Belongs to the NifU family. Component of the core Fe-S cluster (ISC) assembly machinery. [2Fe-2S] cluster is required as a cofactor.

Its subcellular location is the mitochondrion matrix. Its pathway is cofactor biosynthesis; iron-sulfur cluster biosynthesis. Scaffold protein for the de novo synthesis of iron-sulfur (Fe-S) clusters within mitochondria, which is required for maturation of both mitochondrial and cytoplasmic [2Fe-2S] and [4Fe-4S] proteins. First, a [2Fe-2S] cluster is transiently assembled on the scaffold protein ISU1. In a second step, the cluster is released from ISU1, transferred to a glutaredoxin, followed by the formation of mitochondrial [2Fe-2S] proteins, the synthesis of [4Fe-4S] clusters and their target-specific insertion into the recipient apoproteins. Cluster assembly on ISU1 depends on the function of the cysteine desulfurase complex NFS1-ISD11, which serves as the sulfur donor for cluster synthesis, the iron-binding protein frataxin as the putative iron donor, and the electron transfer chain comprised of ferredoxin reductase and ferredoxin, which receive their electrons from NADH. The polypeptide is Iron sulfur cluster assembly protein 1, mitochondrial (ISU1) (Eremothecium gossypii (strain ATCC 10895 / CBS 109.51 / FGSC 9923 / NRRL Y-1056) (Yeast)).